We begin with the raw amino-acid sequence, 421 residues long: ATP-dependent RNA helicase RhlB (421 aa).

A Q motif motif is present at residues 9–37 (QKFSDFALHPKVIEALENKGFHNCTPIQA). The region spanning 40–219 (LPLTLAGRDV…FEQMNNAEYV (180 aa)) is the Helicase ATP-binding domain. 53 to 60 (AQTGTGKT) is a binding site for ATP. Residues 165 to 168 (DEAD) carry the DEAD box motif. A Helicase C-terminal domain is found at 245 to 390 (RLLQTLIEEE…VSKYNPEALM (146 aa)). The segment at 393-421 (LPKPLRLTRSRPGNGPRRTGAPRNRRRSG) is disordered. Over residues 403-414 (RPGNGPRRTGAP) the composition is skewed to low complexity.

It belongs to the DEAD box helicase family. RhlB subfamily. Component of the RNA degradosome, which is a multiprotein complex involved in RNA processing and mRNA degradation.

Its subcellular location is the cytoplasm. It carries out the reaction ATP + H2O = ADP + phosphate + H(+). In terms of biological role, DEAD-box RNA helicase involved in RNA degradation. Has RNA-dependent ATPase activity and unwinds double-stranded RNA. In Citrobacter koseri (strain ATCC BAA-895 / CDC 4225-83 / SGSC4696), this protein is ATP-dependent RNA helicase RhlB.